The chain runs to 685 residues: DNA-directed RNA polymerase subunit beta' (685 aa).

Zn(2+) contacts are provided by Cys-69, Cys-71, Cys-87, and Cys-90. Positions 489, 491, and 493 each coordinate Mg(2+).

The protein belongs to the RNA polymerase beta' chain family. RpoC1 subfamily. In terms of assembly, in plastids the minimal PEP RNA polymerase catalytic core is composed of four subunits: alpha, beta, beta', and beta''. When a (nuclear-encoded) sigma factor is associated with the core the holoenzyme is formed, which can initiate transcription. It depends on Mg(2+) as a cofactor. Requires Zn(2+) as cofactor.

Its subcellular location is the plastid. It is found in the chloroplast. It carries out the reaction RNA(n) + a ribonucleoside 5'-triphosphate = RNA(n+1) + diphosphate. Its function is as follows. DNA-dependent RNA polymerase catalyzes the transcription of DNA into RNA using the four ribonucleoside triphosphates as substrates. The protein is DNA-directed RNA polymerase subunit beta' of Buxus microphylla (Littleleaf boxwood).